The sequence spans 200 residues: Ribonuclease T2 (200 aa).

The cysteines at positions 17 and 22 are disulfide-linked. The active site involves His32. A disulfide bond links Cys42 and Cys89. 2 N-linked (GlcNAc...) asparagine glycosylation sites follow: Asn43 and Asn73. Catalysis depends on residues Glu82 and His86. Asn116 is a glycosylation site (N-linked (GlcNAc...) asparagine). Disulfide bonds link Cys152–Cys188 and Cys170–Cys180.

Belongs to the RNase T2 family.

Its subcellular location is the secreted. It is found in the lysosome lumen. The protein resides in the endoplasmic reticulum lumen. The protein localises to the mitochondrion intermembrane space. The catalysed reaction is a ribonucleotidyl-ribonucleotide-RNA + H2O = a 3'-end 3'-phospho-ribonucleotide-RNA + a 5'-end dephospho-ribonucleoside-RNA + H(+). The enzyme catalyses an adenylyl-uridine-RNA = a 3'-end 2',3'-cyclophospho-AMP-RNA + a 5'-end dephospho-uridine-RNA. It catalyses the reaction a guanylyl-uridine-RNA = a 3'-end 2',3'-cyclophospho-GMP-RNA + a 5'-end dephospho-uridine-RNA. Its activity is regulated as follows. Inhibited by Zn(2+) and Cu(2+). In terms of biological role, ribonuclease that plays an essential role in innate immune response by recognizing and degrading RNAs from microbial pathogens that are subsequently sensed by TLR8. Cleaves preferentially single-stranded RNA molecules between purine and uridine residues, which critically contributes to the supply of catabolic uridine and the generation of purine-2',3'-cyclophosphate-terminated oligoribonucleotides. In turn, RNase T2 degradation products promote the RNA-dependent activation of TLR8. In plasmacytoid dendritic cells, it cooperates with PLD3 or PLD4 5'-&gt;3' exonucleases to process RNA fragments and release 2',3'-cyclic guanosine monophosphate (2',3'-cGMP), a potent stimulatory ligand for TLR7. Also plays a key role in degradation of mitochondrial RNA and processing of non-coding RNA imported from the cytosol into mitochondria. Participates as well in degradation of mitochondrion-associated cytosolic rRNAs. The sequence is that of Ribonuclease T2 (RNASET2) from Sus scrofa (Pig).